A 314-amino-acid chain; its full sequence is tRNA-cytidine(32) 2-sulfurtransferase (314 aa).

Residues 53-58 (SGGKDS) carry the PP-loop motif motif. Cys128, Cys131, and Cys219 together coordinate [4Fe-4S] cluster.

It belongs to the TtcA family. As to quaternary structure, homodimer. The cofactor is Mg(2+). [4Fe-4S] cluster is required as a cofactor.

The protein resides in the cytoplasm. It catalyses the reaction cytidine(32) in tRNA + S-sulfanyl-L-cysteinyl-[cysteine desulfurase] + AH2 + ATP = 2-thiocytidine(32) in tRNA + L-cysteinyl-[cysteine desulfurase] + A + AMP + diphosphate + H(+). It participates in tRNA modification. Functionally, catalyzes the ATP-dependent 2-thiolation of cytidine in position 32 of tRNA, to form 2-thiocytidine (s(2)C32). The sulfur atoms are provided by the cysteine/cysteine desulfurase (IscS) system. This is tRNA-cytidine(32) 2-sulfurtransferase from Colwellia psychrerythraea (strain 34H / ATCC BAA-681) (Vibrio psychroerythus).